We begin with the raw amino-acid sequence, 198 residues long: Dephospho-CoA kinase (198 aa).

Positions 4–198 constitute a DPCK domain; the sequence is RIGLTGGIAS…CGLRADGTTW (195 aa). 12–17 is a binding site for ATP; it reads ASGKSS.

This sequence belongs to the CoaE family.

Its subcellular location is the cytoplasm. The enzyme catalyses 3'-dephospho-CoA + ATP = ADP + CoA + H(+). The protein operates within cofactor biosynthesis; coenzyme A biosynthesis; CoA from (R)-pantothenate: step 5/5. Catalyzes the phosphorylation of the 3'-hydroxyl group of dephosphocoenzyme A to form coenzyme A. The polypeptide is Dephospho-CoA kinase (Parasynechococcus marenigrum (strain WH8102)).